The primary structure comprises 183 residues: Ferritin heavy polypeptide-like 17 (183 aa).

The Ferritin-like diiron domain maps to 11–160; it reads QKYDTNCDAA…GYVSNLRKIC (150 aa). Glu-28, His-66, Glu-108, and Gln-142 together coordinate Fe cation.

The protein belongs to the ferritin family. Testis specific. Also expressed in several cancers.

This chain is Ferritin heavy polypeptide-like 17 (FTHL17), found in Homo sapiens (Human).